The primary structure comprises 502 residues: Maturase K (502 aa).

This sequence belongs to the intron maturase 2 family. MatK subfamily.

The protein localises to the plastid. The protein resides in the chloroplast. In terms of biological role, usually encoded in the trnK tRNA gene intron. Probably assists in splicing its own and other chloroplast group II introns. Binds its homologous trnK precursor transcript. This is Maturase K from Sinapis alba (White mustard).